The primary structure comprises 685 residues: uncharacterized protein (685 aa).

2 disordered regions span residues 502–538 and 635–685; these read NLNQ…SLNK and RSKR…IHNA. A compositionally biased stretch (polar residues) spans 518–538; the sequence is SSENMTKFPSSRGKSTVSLNK. A compositionally biased stretch (basic residues) spans 675-685; the sequence is KLKKSLIIHNA.

This is an uncharacterized protein from Homo sapiens (Human).